We begin with the raw amino-acid sequence, 708 residues long: Leukotoxin translocation ATP-binding protein LktB (708 aa).

Positions 1-126 (MEANHQRNDL…ACYQGQLILV (126 aa)) constitute a Peptidase C39 domain. Residues 155 to 437 (FLETLIVSIF…LAQLWQDFQQ (283 aa)) enclose the ABC transmembrane type-1 domain. 5 helical membrane-spanning segments follow: residues 159–179 (LIVS…FQVV), 192–212 (LNII…LSGL), 270–290 (ALTS…MWYY), 296–316 (LVIL…SPIL), and 389–409 (VMVI…LSIG). Residues 469–704 (ISFKNIRFRY…SNGLYSYLHQ (236 aa)) enclose the ABC transporter domain. 503–510 (GRSGSGKS) lines the ATP pocket.

This sequence belongs to the ABC transporter superfamily. Protein-1 exporter (TC 3.A.1.109) family. In terms of assembly, homodimer.

The protein resides in the cell inner membrane. It carries out the reaction ATP + H2O + proteinSide 1 = ADP + phosphate + proteinSide 2.. Functionally, part of the ABC transporter complex LktBD involved in leukotoxin export. Transmembrane domains (TMD) form a pore in the inner membrane and the ATP-binding domain (NBD) is responsible for energy generation. The sequence is that of Leukotoxin translocation ATP-binding protein LktB (lktB) from Mannheimia haemolytica (Pasteurella haemolytica).